A 176-amino-acid chain; its full sequence is ATP-dependent protease subunit HslV (176 aa).

Residue Thr-5 is part of the active site. Na(+)-binding residues include Ala-161, Cys-164, and Thr-167.

Belongs to the peptidase T1B family. HslV subfamily. In terms of assembly, a double ring-shaped homohexamer of HslV is capped on each side by a ring-shaped HslU homohexamer. The assembly of the HslU/HslV complex is dependent on binding of ATP.

It is found in the cytoplasm. It catalyses the reaction ATP-dependent cleavage of peptide bonds with broad specificity.. With respect to regulation, allosterically activated by HslU binding. Protease subunit of a proteasome-like degradation complex believed to be a general protein degrading machinery. This is ATP-dependent protease subunit HslV from Caldicellulosiruptor bescii (strain ATCC BAA-1888 / DSM 6725 / KCTC 15123 / Z-1320) (Anaerocellum thermophilum).